The sequence spans 820 residues: 1,4-alpha-glucan-branching enzyme, chloroplastic/amyloplastic (820 aa).

Residues 1-20 (MLCLTSSSSSAPAPLLPSLA) are compositionally biased toward low complexity. The interval 1–28 (MLCLTSSSSSAPAPLLPSLADRPSPGIA) is disordered. The N-terminal 64 residues, 1–64 (MLCLTSSSSS…SVPATARKNK (64 aa)), are a transit peptide targeting the chloroplast. (1,4-alpha-D-glucosyl)n is bound by residues W153 and K188. The Nucleophile role is filled by D409. Catalysis depends on E464, which acts as the Proton donor.

The protein belongs to the glycosyl hydrolase 13 family. GlgB subfamily. Monomer.

The protein localises to the plastid. It is found in the chloroplast. It localises to the amyloplast. The enzyme catalyses Transfers a segment of a (1-&gt;4)-alpha-D-glucan chain to a primary hydroxy group in a similar glucan chain.. It functions in the pathway glycan biosynthesis; starch biosynthesis. Its function is as follows. Catalyzes the formation of the alpha-1,6-glucosidic linkages in starch by scission of a 1,4-alpha-linked oligosaccharide from growing alpha-1,4-glucan chains and the subsequent attachment of the oligosaccharide to the alpha-1,6 position. The sequence is that of 1,4-alpha-glucan-branching enzyme, chloroplastic/amyloplastic (SBE1) from Oryza sativa subsp. japonica (Rice).